The chain runs to 409 residues: Argininosuccinate synthase (409 aa).

ATP-binding positions include 11–19 (AYSGGLDTS) and alanine 38. Residues tyrosine 91 and serine 96 each contribute to the L-citrulline site. Glycine 121 contacts ATP. L-aspartate is bound by residues threonine 123, asparagine 127, and aspartate 128. L-citrulline is bound at residue asparagine 127. L-citrulline is bound by residues arginine 131, serine 182, serine 191, glutamate 267, and tyrosine 279.

Belongs to the argininosuccinate synthase family. Type 1 subfamily. As to quaternary structure, homotetramer.

It is found in the cytoplasm. The catalysed reaction is L-citrulline + L-aspartate + ATP = 2-(N(omega)-L-arginino)succinate + AMP + diphosphate + H(+). Its pathway is amino-acid biosynthesis; L-arginine biosynthesis; L-arginine from L-ornithine and carbamoyl phosphate: step 2/3. The chain is Argininosuccinate synthase from Xanthobacter autotrophicus (strain ATCC BAA-1158 / Py2).